The chain runs to 341 residues: Transmembrane protein 120A-A (341 aa).

The Cytoplasmic segment spans residues 1-131 (MLFNPTGLTE…KQSKFAYKDE (131 aa)). Lys129 is a CoA binding site. Residues 132 to 151 (YEKFKLYLTVLLLFFSFTCR) form a helical membrane-spanning segment. Residues 152–157 (FLVSYR) lie on the Extracellular side of the membrane. Residues 158–176 (VVDALFNFLLVWYYCTLTI) traverse the membrane as a helical segment. At 177 to 189 (RESILINNGSKIK) the chain is on the cytoplasmic side. Positions 186 and 187 each coordinate CoA. The chain crosses the membrane as a helical span at residues 190–208 (GWWVFQHYVSTFLSGVMLT). Residues 209 to 217 (WPDGELYQM) are Extracellular-facing. The chain crosses the membrane as a helical span at residues 218–239 (FRNQFLSYSMYINFVQFFQYYY). CoA-binding residues include Gln236, Tyr239, Gln240, and His282. Topologically, residues 240–269 (QSGCLYRLRALGERHNMDLTVEGFQSWMWR) are cytoplasmic. A helical transmembrane segment spans residues 270 to 293 (GLTFLLPFLFLGHFFQLYNGITLF). Topologically, residues 294–303 (QMTQLPEWKE) are extracellular. The helical transmembrane segment at 304-329 (WQVLMCGSTFLVLFMGNFFTTLGVVY) threads the bilayer. The Cytoplasmic segment spans residues 330–341 (HKYMDQDKAKGL). Lys331 contributes to the CoA binding site.

It belongs to the TMEM120 family. Homodimer.

The protein resides in the cell membrane. Its subcellular location is the nucleus inner membrane. It localises to the endoplasmic reticulum. Multifunctional protein involved in mechanosensation, and plays an essential role in lipid metabolism. May function as a potential ion channel involved in sensing mechanical stimuli. TMEM120A is structurally similar to a lipid-modifying enzyme, ELOVL7, and contains a bound coenzyme A molecule, which suggests it might function as an enzyme in lipid metabolism. This chain is Transmembrane protein 120A-A (tmem120aa), found in Danio rerio (Zebrafish).